A 137-amino-acid polypeptide reads, in one-letter code: Acidic phospholipase A2 beta-bungarotoxin A chain (137 aa).

The signal sequence occupies residues 1-9 (AVCVSLLGA). Positions 10 to 17 (ANIPPHPL) are excised as a propeptide. Disulfide bonds link Cys-44–Cys-136, Cys-46–Cys-62, Cys-61–Cys-117, Cys-68–Cys-110, Cys-78–Cys-103, and Cys-96–Cys-108. The Ca(2+) site is built by Tyr-45, Gly-47, and Gly-49. The active site involves His-65. Asp-66 serves as a coordination point for Ca(2+). Asp-111 is an active-site residue.

This sequence belongs to the phospholipase A2 family. Group I subfamily. D49 sub-subfamily. In terms of assembly, heterodimer; disulfide-linked. The A chain has phospholipase A2 activity and the B chain shows homology with the basic protease inhibitors. Ca(2+) serves as cofactor. As to expression, expressed by the venom gland.

It localises to the secreted. It catalyses the reaction a 1,2-diacyl-sn-glycero-3-phosphocholine + H2O = a 1-acyl-sn-glycero-3-phosphocholine + a fatty acid + H(+). Beta bungarotoxin is a presynaptic neurotoxin. The A chain has phospholipase activity. PLA2 catalyzes the calcium-dependent hydrolysis of the 2-acyl groups in 3-sn-phosphoglycerides. This chain is Acidic phospholipase A2 beta-bungarotoxin A chain, found in Bungarus candidus (Malayan krait).